The sequence spans 243 residues: Ornithine decarboxylase antizyme 3 (243 aa).

A phosphoserine mark is found at Ser6, Ser9, and Ser12.

The protein belongs to the ODC antizyme family. As to quaternary structure, interacts with ODC1 and thereby sterically blocks ODC homodimerization. Interacts with AZIN2; this interaction disrupts the interaction between the antizyme and ODC1. Interacts with GGN. As to expression, testis specific. Expressed throughout the differentiation process from spermatids to spermatozoa in the inner part of the seminiferous tubules.

It is found in the nucleus. It localises to the cytoplasm. Its function is as follows. Ornithine decarboxylase (ODC) antizyme protein that negatively regulates ODC activity and intracellular polyamine biosynthesis and uptake in response to increased intracellular polyamine levels. Binds to ODC monomers, inhibiting the assembly of the functional ODC homodimers. Does not target the ODC monomers for degradation, which allows a protein synthesis-independent restoration of ODC activity. Stabilizes AZIN2 by interfering with its ubiquitination. Involved in the translocation of AZNI2 from ER-Golgi intermediate compartment (ERGIC) to the cytosol. Probably plays a key role in spermatogenesis by regulating the intracellular concentration of polyamines in haploid germ cells. The polypeptide is Ornithine decarboxylase antizyme 3 (Oaz3) (Mus musculus (Mouse)).